The sequence spans 349 residues: S-adenosylmethionine:tRNA ribosyltransferase-isomerase (349 aa).

This sequence belongs to the QueA family. As to quaternary structure, monomer.

The protein localises to the cytoplasm. It catalyses the reaction 7-aminomethyl-7-carbaguanosine(34) in tRNA + S-adenosyl-L-methionine = epoxyqueuosine(34) in tRNA + adenine + L-methionine + 2 H(+). It functions in the pathway tRNA modification; tRNA-queuosine biosynthesis. Its function is as follows. Transfers and isomerizes the ribose moiety from AdoMet to the 7-aminomethyl group of 7-deazaguanine (preQ1-tRNA) to give epoxyqueuosine (oQ-tRNA). The sequence is that of S-adenosylmethionine:tRNA ribosyltransferase-isomerase from Pseudomonas putida (strain GB-1).